Reading from the N-terminus, the 106-residue chain is ATP-dependent Clp protease adapter protein ClpS (106 aa).

Belongs to the ClpS family. In terms of assembly, binds to the N-terminal domain of the chaperone ClpA.

Its function is as follows. Involved in the modulation of the specificity of the ClpAP-mediated ATP-dependent protein degradation. The polypeptide is ATP-dependent Clp protease adapter protein ClpS (Salmonella arizonae (strain ATCC BAA-731 / CDC346-86 / RSK2980)).